The following is a 168-amino-acid chain: Myosin regulatory light chain 11 (168 aa).

Alanine 2 is subject to N,N,N-trimethylalanine. Residue serine 15 is modified to Phosphoserine. 3 EF-hand domains span residues 24–59, 94–129, and 130–165; these read TQIQ…MGRL, DPED…QCDR, and FTPE…GEDK. The Ca(2+) site is built by aspartate 37, asparagine 39, aspartate 41, and aspartate 48.

As to quaternary structure, myosin is a hexamer of 2 heavy chains and 4 light chains. In terms of processing, the N-terminus is blocked. N,N,N-trimethylalanine, found in other myosin light chains would not have been detected in the N-terminal tryptic peptide in PubMed:7358336 because it would remain trimethylated and ninhydrin negative after hydrolysis.

Functionally, myosin regulatory subunit that plays an essential to maintain muscle integrity during early development. Plays a role in muscle contraction. This Gallus gallus (Chicken) protein is Myosin regulatory light chain 11 (MYL11).